Reading from the N-terminus, the 133-residue chain is Small ribosomal subunit protein uS8 (133 aa).

The protein belongs to the universal ribosomal protein uS8 family. In terms of assembly, part of the 30S ribosomal subunit.

Functionally, one of the primary rRNA binding proteins, it binds directly to 16S rRNA central domain where it helps coordinate assembly of the platform of the 30S subunit. This is Small ribosomal subunit protein uS8 from Metallosphaera sedula (strain ATCC 51363 / DSM 5348 / JCM 9185 / NBRC 15509 / TH2).